A 305-amino-acid chain; its full sequence is U6 small nuclear RNA (adenine-(43)-N(6))-methyltransferase (305 aa).

Residues arginine 87, glycine 112, glutamate 135, threonine 166, and asparagine 188 each coordinate S-adenosyl-L-methionine. The disordered stretch occupies residues 197 to 221; it reads PNPLGGNTRNPERRPAPNNARTGSQ.

The protein belongs to the methyltransferase superfamily. METTL16/RlmF family.

It catalyses the reaction adenosine in U6 snRNA + S-adenosyl-L-methionine = N(6)-methyladenosine in U6 snRNA + S-adenosyl-L-homocysteine + H(+). In terms of biological role, RNA N6-methyltransferase that mediates N6-methylation of adenine of U6 small nuclear RNA (U6 snRNA). This Drosophila melanogaster (Fruit fly) protein is U6 small nuclear RNA (adenine-(43)-N(6))-methyltransferase.